The chain runs to 190 residues: DNA dC-&gt;dU-editing enzyme APOBEC-3C (190 aa).

A CMP/dCMP-type deaminase domain is found at 29 to 138 (DRNETWLCFT…PCYQEGLRSL (110 aa)). The segment at 40 to 86 (EGIKRRSVVSWKTGVFRNQVDSETHCHAERCFLSWFCDDILSPNTKY) is (Microbial infection) Required for interaction with human foamy virus protein Bet. Residue histidine 66 participates in Zn(2+) binding. The active-site Proton donor is the glutamate 68. Cysteine 97 and cysteine 100 together coordinate Zn(2+).

Belongs to the cytidine and deoxycytidylate deaminase family. In terms of assembly, homodimer. Interacts with TRIB3. Interacts with AGO2. (Microbial infection) Interacts with human foamy virus protein Bet; this interaction does not induce APOBEC3C degradation but prevents its dimerization and incorporation into the virion by binding of Bet close to or within the APOBEC3C dimerization site. As to quaternary structure, (Microbial infection) Interacts with HIV-1 Vif. Requires Zn(2+) as cofactor. Expressed in spleen, testes, peripherical blood lymphocytes, heart, thymus, prostate and ovary.

The protein resides in the nucleus. It is found in the cytoplasm. It catalyses the reaction a 2'-deoxycytidine in single-stranded DNA + H2O + H(+) = a 2'-deoxyuridine in single-stranded DNA + NH4(+). (Microbial infection) Antiviral activity is neutralized by the HIV-1 virion infectivity factor (Vif), that prevents its incorporation into progeny HIV-1 virions by both inhibiting its translation and/or by inducing its ubiquitination and subsequent degradation by the 26S proteasome. In terms of biological role, DNA deaminase (cytidine deaminase) which acts as an inhibitor of retrovirus replication and retrotransposon mobility via deaminase-dependent and -independent mechanisms. After the penetration of retroviral nucleocapsids into target cells of infection and the initiation of reverse transcription, it can induce the conversion of cytosine to uracil in the minus-sense single-strand viral DNA, leading to G-to-A hypermutations in the subsequent plus-strand viral DNA. The resultant detrimental levels of mutations in the proviral genome, along with a deamination-independent mechanism that works prior to the proviral integration, together exert efficient antiretroviral effects in infected target cells. Selectively targets single-stranded DNA and does not deaminate double-stranded DNA or single- or double-stranded RNA. Exhibits antiviral activity against simian immunodeficiency virus (SIV), hepatitis B virus (HBV), herpes simplex virus 1 (HHV-1) and Epstein-Barr virus (EBV) and may inhibit the mobility of LTR and non-LTR retrotransposons. May also play a role in the epigenetic regulation of gene expression through the process of active DNA demethylation. The protein is DNA dC-&gt;dU-editing enzyme APOBEC-3C (APOBEC3C) of Homo sapiens (Human).